A 474-amino-acid chain; its full sequence is Selection and upkeep of intraepithelial T-cells protein 4 (474 aa).

A signal peptide spans 1–25; sequence MGATEVLTSYCVVLCLLQMVALSSG. Residues 26–241 lie on the Extracellular side of the membrane; sequence HFTVIGSQRP…VLSGELFSWK (216 aa). Residues 27-140 form the Ig-like V-type domain; sequence FTVIGSQRPI…EEHITEVKVT (114 aa). 2 cysteine pairs are disulfide-bonded: Cys-48/Cys-122 and Cys-162/Cys-216. Residues Asn-111 and Asn-199 are each glycosylated (N-linked (GlcNAc...) asparagine). The region spanning 141 to 234 is the Ig-like C1-type domain; it reads ATSSDIQILM…QEQSINIVLS (94 aa). Residues 242-262 traverse the membrane as a helical segment; that stretch reads IVWIMILSTISFVMIDFCMTY. Over 263-298 the chain is Cytoplasmic; it reads CVQQQLIHEESLSTVDNDQCESDQSEGTCYKRNYPW. A helical transmembrane segment spans residues 299–319; that stretch reads IIIAVVPIISVFAIIGVMLFL. Residues 320 to 341 lie on the Extracellular side of the membrane; that stretch reads HLEQRVTILEQHFELDTLWLED. Residues 342–362 traverse the membrane as a helical segment; that stretch reads ISVILCVVIVSNINLIPLIYF. The Cytoplasmic segment spans residues 363 to 381; that stretch reads RLHEHVPRFKDRSPILNKA. The chain crosses the membrane as a helical span at residues 382–402; sequence VVFLHFIYFSIVCGTILLVHL. The Extracellular segment spans residues 403-420; sequence QLRNKVSISDSLFSLYNS. A helical membrane pass occupies residues 421–441; sequence WLTDISMILGFLLSIFIVTTI. The Cytoplasmic portion of the chain corresponds to 442-474; the sequence is AKSSLFNKKWCIGLCIHMKEAEATGGPCEGEEL.

It belongs to the SKINT family. As to expression, expressed in skin, thymus and, to a lower extent, bladder and testis.

The protein resides in the membrane. Functionally, may act by engaging a cell surface molecule on immature T-cells in the embryonic thymus. This is Selection and upkeep of intraepithelial T-cells protein 4 (Skint4) from Mus musculus (Mouse).